A 198-amino-acid chain; its full sequence is Capsid protein (198 aa).

The protein resides in the virion. The sequence is that of Capsid protein from Vitis vinifera (Grape).